A 328-amino-acid chain; its full sequence is Aspartate carbamoyltransferase catalytic subunit (328 aa).

Residues R70 and T71 each contribute to the carbamoyl phosphate site. Residue K98 coordinates L-aspartate. R120, H150, and Q153 together coordinate carbamoyl phosphate. Residues R183 and R238 each contribute to the L-aspartate site. G279 and P280 together coordinate carbamoyl phosphate.

It belongs to the aspartate/ornithine carbamoyltransferase superfamily. ATCase family. As to quaternary structure, heterododecamer (2C3:3R2) of six catalytic PyrB chains organized as two trimers (C3), and six regulatory PyrI chains organized as three dimers (R2).

The enzyme catalyses carbamoyl phosphate + L-aspartate = N-carbamoyl-L-aspartate + phosphate + H(+). It participates in pyrimidine metabolism; UMP biosynthesis via de novo pathway; (S)-dihydroorotate from bicarbonate: step 2/3. Its function is as follows. Catalyzes the condensation of carbamoyl phosphate and aspartate to form carbamoyl aspartate and inorganic phosphate, the committed step in the de novo pyrimidine nucleotide biosynthesis pathway. The sequence is that of Aspartate carbamoyltransferase catalytic subunit from Methylococcus capsulatus (strain ATCC 33009 / NCIMB 11132 / Bath).